The sequence spans 150 residues: SPbeta prophage-derived uncharacterized protein YoqH (150 aa).

A signal peptide spans 1-23 (MKRFILVLSFLSIIVAYPIQTNA).

In Bacillus subtilis (strain 168), this protein is SPbeta prophage-derived uncharacterized protein YoqH (yoqH).